Reading from the N-terminus, the 1036-residue chain is Mitogen-activated protein kinase kinase kinase 21 (1036 aa).

Residues 1-36 (MALRGAAGATDTPVSSAGGAPGGSASSSSTSSGGSA) form a disordered region. Positions 15–36 (SSAGGAPGGSASSSSTSSGGSA) are enriched in low complexity. An SH3 domain is found at 38-102 (AGAGLWAALY…PANYVAPCRP (65 aa)). Residues 124–401 (LELKELIGAG…ALILEQLTAI (278 aa)) enclose the Protein kinase domain. Residues 130 to 138 (IGAGGFGQV) and Lys-151 each bind ATP. Asp-263 functions as the Proton acceptor in the catalytic mechanism. Thr-299 bears the Phosphothreonine; by autocatalysis mark. Ser-303 carries the post-translational modification Phosphoserine; by autocatalysis and MAP4K1. Leucine-zipper regions lie at residues 425–446 (IQQMFDELRTKEKELRSREEEL) and 460–481 (LKRREQQLAEREIDVLERELNI). Residues 517–551 (SDFQHKITVQASPNLDKRRSLNSSSSSPPSSPTMM) are disordered. A phosphoserine mark is found at Ser-528, Ser-543, and Ser-547. Position 592 is a phosphothreonine (Thr-592). Ser-614 carries the post-translational modification Phosphoserine. Residues 748–763 (AEEPLPKEEKKKREGI) are compositionally biased toward basic and acidic residues. Disordered regions lie at residues 748–791 (AEEP…SSPP) and 923–954 (PHSHLPREVSPKKHSTVHIVPQRRPASLRSRS).

This sequence belongs to the protein kinase superfamily. STE Ser/Thr protein kinase family. MAP kinase kinase kinase subfamily. As to quaternary structure, homodimer. Interacts with TLR4. Requires Mg(2+) as cofactor. In terms of processing, autophosphorylation on serine and threonine residues within the activation loop plays a role in enzyme activation.

The catalysed reaction is L-seryl-[protein] + ATP = O-phospho-L-seryl-[protein] + ADP + H(+). The enzyme catalyses L-threonyl-[protein] + ATP = O-phospho-L-threonyl-[protein] + ADP + H(+). Its activity is regulated as follows. Homodimerization via the leucine zipper domains is required for autophosphorylation and subsequent activation. In terms of biological role, negative regulator of TLR4 signaling. Does not activate JNK1/MAPK8 pathway, p38/MAPK14, nor ERK2/MAPK1 pathways. The sequence is that of Mitogen-activated protein kinase kinase kinase 21 from Homo sapiens (Human).